Consider the following 522-residue polypeptide: AAA ATPase forming ring-shaped complexes (522 aa).

Residues 1-26 form a disordered region; sequence MGQEKHTDAASQSRDPEAVAAHENDQ. A coiled-coil region spans residues 20–57; sequence AAHENDQLRQRNHALAKALTRATEELRKAKAQLEQFMA. 248–253 lines the ATP pocket; that stretch reads GNGKTL.

Belongs to the AAA ATPase family. In terms of assembly, homohexamer. Assembles into a hexameric ring structure.

This chain is AAA ATPase forming ring-shaped complexes, found in Bifidobacterium animalis subsp. lactis (strain AD011).